The primary structure comprises 469 residues: MSEDLSMKCGLEIHVQVDTNSKLFCQCPTNYKDVEPNTNICPVCIGHPGAKPMPPNKKAIDVAIMVAKMLDCEMVIDKDIYFQRKHYNYPDLPSGYQKTSVPIGEHGTFLGVGITEVHLEEDPGQYKPDLGTVDYNRSGTPLIEIVTDPDMKSPEEAREFLRQLMRLFRYIGHLRGEGTMRADTNISIKYNGIQGNRVEVKNVNSIRGVYKVLKYELIRQKNVLRRGGEIKMETRAFMESQMITKGMRSKETADDYRYIPDPDLQPIVLNNNWVEKVEAQMPETPMNKEKRFVEQYGIKEDDAKVLVSDLELADVFEKVVAELGNDKNGISLAVTWIRNELKRVLVYNKIEFFETNLKPEHMVELINSIKDKTISQKIGKTIIEQMVEHKGEKTPKELITEMGLTVIEDTSELEKACEEAIKNSEKAVEDYKSGNQRALNSVVGQVMKLTRGRAEPGTVVKILKKKIDG.

It belongs to the GatB/GatE family. GatB subfamily. As to quaternary structure, heterotrimer of A, B and C subunits.

It catalyses the reaction L-glutamyl-tRNA(Gln) + L-glutamine + ATP + H2O = L-glutaminyl-tRNA(Gln) + L-glutamate + ADP + phosphate + H(+). It carries out the reaction L-aspartyl-tRNA(Asn) + L-glutamine + ATP + H2O = L-asparaginyl-tRNA(Asn) + L-glutamate + ADP + phosphate + 2 H(+). Allows the formation of correctly charged Asn-tRNA(Asn) or Gln-tRNA(Gln) through the transamidation of misacylated Asp-tRNA(Asn) or Glu-tRNA(Gln) in organisms which lack either or both of asparaginyl-tRNA or glutaminyl-tRNA synthetases. The reaction takes place in the presence of glutamine and ATP through an activated phospho-Asp-tRNA(Asn) or phospho-Glu-tRNA(Gln). The sequence is that of Aspartyl/glutamyl-tRNA(Asn/Gln) amidotransferase subunit B from Methanococcus maripaludis (strain DSM 14266 / JCM 13030 / NBRC 101832 / S2 / LL).